Consider the following 753-residue polypeptide: Probable dipeptidyl peptidase 4 (753 aa).

The N-terminal stretch at 1–18 (MKTSQFLSLLLLAGIAQA) is a signal peptide. 3 N-linked (GlcNAc...) asparagine glycosylation sites follow: Asn-84, Asn-114, and Asn-222. Residues Ser-616, Asp-668, and His-703 each act as charge relay system in the active site.

It belongs to the peptidase S9B family.

It is found in the secreted. The enzyme catalyses Release of an N-terminal dipeptide, Xaa-Yaa-|-Zaa-, from a polypeptide, preferentially when Yaa is Pro, provided Zaa is neither Pro nor hydroxyproline.. Extracellular dipeptidyl-peptidase which removes N-terminal dipeptides sequentially from polypeptides having unsubstituted N-termini provided that the penultimate residue is proline. Contributes to pathogenicity. This Trichophyton verrucosum (strain HKI 0517) protein is Probable dipeptidyl peptidase 4 (DPP4).